The chain runs to 154 residues: Low molecular weight protein-tyrosine-phosphatase PtpA (154 aa).

Cys8 (nucleophile) is an active-site residue. Arg14 is an active-site residue. The active-site Proton donor is Asp120.

Belongs to the low molecular weight phosphotyrosine protein phosphatase family.

The enzyme catalyses O-phospho-L-tyrosyl-[protein] + H2O = L-tyrosyl-[protein] + phosphate. Dephosphorylates the phosphotyrosine-containing proteins. In Staphylococcus epidermidis (strain ATCC 35984 / DSM 28319 / BCRC 17069 / CCUG 31568 / BM 3577 / RP62A), this protein is Low molecular weight protein-tyrosine-phosphatase PtpA (ptpA).